We begin with the raw amino-acid sequence, 271 residues long: Phosphoribosylformylglycinamidine synthase subunit PurQ (271 aa).

One can recognise a Glutamine amidotransferase type-1 domain in the interval lysine 7–glycine 253. Cysteine 104 (nucleophile) is an active-site residue. Active-site residues include histidine 238 and glutamate 240.

As to quaternary structure, part of the FGAM synthase complex composed of 1 PurL, 1 PurQ and 2 PurS subunits.

The protein localises to the cytoplasm. It carries out the reaction N(2)-formyl-N(1)-(5-phospho-beta-D-ribosyl)glycinamide + L-glutamine + ATP + H2O = 2-formamido-N(1)-(5-O-phospho-beta-D-ribosyl)acetamidine + L-glutamate + ADP + phosphate + H(+). The enzyme catalyses L-glutamine + H2O = L-glutamate + NH4(+). It participates in purine metabolism; IMP biosynthesis via de novo pathway; 5-amino-1-(5-phospho-D-ribosyl)imidazole from N(2)-formyl-N(1)-(5-phospho-D-ribosyl)glycinamide: step 1/2. Functionally, part of the phosphoribosylformylglycinamidine synthase complex involved in the purines biosynthetic pathway. Catalyzes the ATP-dependent conversion of formylglycinamide ribonucleotide (FGAR) and glutamine to yield formylglycinamidine ribonucleotide (FGAM) and glutamate. The FGAM synthase complex is composed of three subunits. PurQ produces an ammonia molecule by converting glutamine to glutamate. PurL transfers the ammonia molecule to FGAR to form FGAM in an ATP-dependent manner. PurS interacts with PurQ and PurL and is thought to assist in the transfer of the ammonia molecule from PurQ to PurL. The polypeptide is Phosphoribosylformylglycinamidine synthase subunit PurQ (Archaeoglobus fulgidus (strain ATCC 49558 / DSM 4304 / JCM 9628 / NBRC 100126 / VC-16)).